Consider the following 151-residue polypeptide: RNA polymerase-binding transcription factor DksA (151 aa).

Residues 34-54 (EAQLSHFKRILEAWRNQLRDE) are a coiled coil. Positions 114, 117, 135, and 138 each coordinate Zn(2+). The dksA C4-type zinc finger occupies 114 to 138 (CESCGVEIGIRRLEARPTADLCIDC).

The protein belongs to the DksA family. Interacts directly with the RNA polymerase.

The protein localises to the cytoplasm. Transcription factor that acts by binding directly to the RNA polymerase (RNAP). Required for negative regulation of rRNA expression and positive regulation of several amino acid biosynthesis promoters. Also required for regulation of fis expression. The sequence is that of RNA polymerase-binding transcription factor DksA from Salmonella typhi.